A 414-amino-acid chain; its full sequence is Glutamyl-tRNA reductase (414 aa).

Residues Thr-49–Arg-52, Ser-108, Glu-113–Gln-115, and Gln-119 contribute to the substrate site. The Nucleophile role is filled by Cys-50. Residue Gly-188–Gly-193 coordinates NADP(+).

The protein belongs to the glutamyl-tRNA reductase family. Homodimer.

The catalysed reaction is (S)-4-amino-5-oxopentanoate + tRNA(Glu) + NADP(+) = L-glutamyl-tRNA(Glu) + NADPH + H(+). It functions in the pathway porphyrin-containing compound metabolism; protoporphyrin-IX biosynthesis; 5-aminolevulinate from L-glutamyl-tRNA(Glu): step 1/2. Catalyzes the NADPH-dependent reduction of glutamyl-tRNA(Glu) to glutamate 1-semialdehyde (GSA). The chain is Glutamyl-tRNA reductase from Francisella tularensis subsp. holarctica (strain LVS).